A 183-amino-acid chain; its full sequence is MPTFPTTTSSWDNLLNALARSSIWNWLQAMFIGETTSAPQPTNLGILDNLAPAVQIILGISFLTLLAIGLFALWKRSIRSIQKIVMFVITLYQLYKKGSDFFQVLLANPEGSGRQIQDNNNIFLSLGLQEKILKKLQMVENKVRDLEGIIVARKPASKRDCSSEPYCSCSDCQSPLPTSGFTS.

The chain crosses the membrane as a helical span at residues 54–74 (VQIILGISFLTLLAIGLFALW). Positions 127-150 (GLQEKILKKLQMVENKVRDLEGII) form a coiled coil.

Its subcellular location is the membrane. In Mus musculus (Mouse), this protein is Transmembrane and coiled-coil domain-containing protein 2 (Tmco2).